The following is a 318-amino-acid chain: ADP-L-glycero-D-manno-heptose-6-epimerase (318 aa).

Residues Phe10 to Ile11, Asp31 to Asp32, Lys38, Lys53, and Glu79 to Ser83 each bind NADP(+). The Proton acceptor role is filled by Tyr144. Residue Lys148 participates in NADP(+) binding. A substrate-binding site is contributed by Asn173. Residues Val174 and Lys182 each contribute to the NADP(+) site. Lys182 acts as the Proton acceptor in catalysis. Substrate is bound by residues Ser184, His191, Phe205–Cys208, Arg218, and Tyr282.

This sequence belongs to the NAD(P)-dependent epimerase/dehydratase family. HldD subfamily. In terms of assembly, homopentamer. NADP(+) serves as cofactor.

It catalyses the reaction ADP-D-glycero-beta-D-manno-heptose = ADP-L-glycero-beta-D-manno-heptose. It functions in the pathway nucleotide-sugar biosynthesis; ADP-L-glycero-beta-D-manno-heptose biosynthesis; ADP-L-glycero-beta-D-manno-heptose from D-glycero-beta-D-manno-heptose 7-phosphate: step 4/4. Its function is as follows. Catalyzes the interconversion between ADP-D-glycero-beta-D-manno-heptose and ADP-L-glycero-beta-D-manno-heptose via an epimerization at carbon 6 of the heptose. The polypeptide is ADP-L-glycero-D-manno-heptose-6-epimerase (Aeromonas hydrophila subsp. hydrophila (strain ATCC 7966 / DSM 30187 / BCRC 13018 / CCUG 14551 / JCM 1027 / KCTC 2358 / NCIMB 9240 / NCTC 8049)).